The following is a 98-amino-acid chain: NADH-ubiquinone oxidoreductase chain 4L (98 aa).

The next 3 helical transmembrane spans lie at 1 to 21, 28 to 48, and 59 to 79; these read MMSI…GVLI, STLL…ALLI, and APLI…ALLV.

Belongs to the complex I subunit 4L family. In terms of assembly, core subunit of respiratory chain NADH dehydrogenase (Complex I) which is composed of 45 different subunits.

It is found in the mitochondrion inner membrane. It carries out the reaction a ubiquinone + NADH + 5 H(+)(in) = a ubiquinol + NAD(+) + 4 H(+)(out). In terms of biological role, core subunit of the mitochondrial membrane respiratory chain NADH dehydrogenase (Complex I) which catalyzes electron transfer from NADH through the respiratory chain, using ubiquinone as an electron acceptor. Part of the enzyme membrane arm which is embedded in the lipid bilayer and involved in proton translocation. This Lagorchestes hirsutus (Rufous hare-wallaby) protein is NADH-ubiquinone oxidoreductase chain 4L (MT-ND4L).